The following is a 289-amino-acid chain: Mas-related G-protein coupled receptor member G (289 aa).

Topologically, residues 1–13 (MFGLFGLWRTFDS) are extracellular. The chain crosses the membrane as a helical span at residues 14–34 (VVFYLTLIVGLGGPVGNGLVL). Topologically, residues 35 to 42 (WNLGFRIK) are cytoplasmic. Residues 43–63 (KGPFSIYLLHLAAADFLFLSC) form a helical membrane-spanning segment. Residues 64–78 (RVGFSVAQAALGAQD) are Extracellular-facing. A helical membrane pass occupies residues 79-99 (TLYFVLTFLWFAVGLWLLAAF). Over 100–120 (SVERCLSDLFPACYQGCRPRH) the chain is Cytoplasmic. The helical transmembrane segment at 121–141 (ASAVLCALVWTPTLPAVPLPA) threads the bilayer. The Extracellular segment spans residues 142 to 163 (NACGLLRNSACPLVCPRYHVAS). Residues 164–184 (VTWFLVLARVAWTAGVVLFVW) form a helical membrane-spanning segment. Topologically, residues 185 to 195 (VTCCSTRPRPR) are cytoplasmic. The helical transmembrane segment at 196-216 (LYGIVLGALLLLFFCGLPSVF) threads the bilayer. At 217–221 (YWSLQ) the chain is on the extracellular side. A helical membrane pass occupies residues 222–242 (PLLNFLLPVFSPLATLLACVN). The Cytoplasmic portion of the chain corresponds to 243-289 (SSSKPLIYSGLGRQPGKREPLRSVLRRALGEGAELGARGQSLPMGLL).

Belongs to the G-protein coupled receptor 1 family. Mas subfamily.

The protein localises to the cell membrane. Its function is as follows. Orphan receptor. May regulate nociceptor function and/or development, including the sensation or modulation of pain. In Homo sapiens (Human), this protein is Mas-related G-protein coupled receptor member G (MRGPRG).